The primary structure comprises 295 residues: Protease HtpX (295 aa).

The next 2 helical transmembrane spans lie at 4–24 (ILLF…TLSL) and 42–62 (QLLV…LFIS). His-147 is a Zn(2+) binding site. Glu-148 is an active-site residue. A Zn(2+)-binding site is contributed by His-151. 2 consecutive transmembrane segments (helical) span residues 158–178 (VTLA…ARII) and 195–215 (IAYF…ASAI). Glu-224 contacts Zn(2+).

The protein belongs to the peptidase M48B family. The cofactor is Zn(2+).

Its subcellular location is the cell inner membrane. The chain is Protease HtpX from Pseudomonas fluorescens (strain SBW25).